The chain runs to 628 residues: Inactive sodium-dependent neutral amino acid transporter B(0)AT3 (628 aa).

The Cytoplasmic portion of the chain corresponds to 1–26 (MAHAPEPDPAACDLGDERPKWDNKAQ). Residues 27–47 (YLLSCTGFAVGLGNIWRFPYL) traverse the membrane as a helical segment. The Extracellular portion of the chain corresponds to 48-51 (CQTY). The chain crosses the membrane as a helical span at residues 52 to 74 (GGGAFLIPYVIALVFEGIPIFHV). The Cytoplasmic segment spans residues 75 to 88 (ELAIGQRLRKGSVG). Residues 89–111 (VWTAISPYLSGVGLGCVTLSFLI) traverse the membrane as a helical segment. The Extracellular segment spans residues 112-178 (SLYYNTIVAW…ITADINDSGS (67 aa)). N-linked (GlcNAc...) asparagine glycans are attached at residues N144, N168, and N174. The helical transmembrane segment at 179–201 (IQWWLLICLAASWAVVYMCVIRG) threads the bilayer. Residues 202-207 (IETTGK) lie on the Cytoplasmic side of the membrane. A helical transmembrane segment spans residues 208 to 230 (VIYFTALFPYLVLTIFLIRGLTL). The Extracellular portion of the chain corresponds to 231–253 (PGATKGLIYLFTPNMHILQNPRV). A helical membrane pass occupies residues 254 to 276 (WLDAATQIFFSLSLAFGGHIAFA). Topologically, residues 277–288 (SYNSPRNDCQKD) are cytoplasmic. The chain crosses the membrane as a helical span at residues 289–311 (AVVIALVNRMTSLYASIAVFSVL). Residues 312–399 (GFKATNDYEH…TETDLHMPGA (88 aa)) lie on the Extracellular side of the membrane. N-linked (GlcNAc...) asparagine glycosylation occurs at N354. The helical transmembrane segment at 400-422 (PVWAMLFFGMLFTLGLSTMFGTV) threads the bilayer. The Cytoplasmic segment spans residues 423 to 442 (EAVITPLLDVGVLPRWVPKE). Residues 443–465 (ALTGLVCLVCFLSATCFTLQSGN) traverse the membrane as a helical segment. At 466–474 (YWLEIFDNF) the chain is on the extracellular side. A helical transmembrane segment spans residues 475 to 497 (AASPNLLMLAFLEVVGVVYVYGM). Over 498–517 (KRFCDDIAWMTGRRPSPYWR) the chain is Cytoplasmic. A helical membrane pass occupies residues 518–540 (LTWRVVSPLLLTIFVAYIILLFW). Residues 541-568 (KPLRYKAWNPKYELFPSRQEKLYPGWAR) lie on the Extracellular side of the membrane. A helical membrane pass occupies residues 569–591 (AACVLLSLLPVLWVPVAALAQLL). Over 592–628 (TRRRRTWRDRDARPDTDMRPDTDTRPDTDMRPDTDMR) the chain is Cytoplasmic. The interval 602-628 (DARPDTDMRPDTDTRPDTDMRPDTDMR) is disordered.

It belongs to the sodium:neurotransmitter symporter (SNF) (TC 2.A.22) family. SLC6A18 subfamily. As to expression, abundantly expressed in kidney, but not in intestine.

It localises to the membrane. Does not show neutral amino acid transporter activity. The chain is Inactive sodium-dependent neutral amino acid transporter B(0)AT3 from Homo sapiens (Human).